Reading from the N-terminus, the 360-residue chain is Arginase, non-hepatic 3 (360 aa).

Mn(2+) is bound by residues histidine 122, aspartate 145, histidine 147, and aspartate 149. Residues 147–151 (HADIN), 158–160 (SGN), and aspartate 204 each bind substrate. Mn(2+)-binding residues include aspartate 253 and aspartate 255. Positions 267 and 298 each coordinate substrate.

It belongs to the arginase family. Homotrimer. It depends on Mn(2+) as a cofactor. In terms of tissue distribution, expressed at differing tadpole stages in tail, intestine, hindlimb and trunk region. Strongest in tadpole tail.

The enzyme catalyses L-arginine + H2O = urea + L-ornithine. Its pathway is nitrogen metabolism; urea cycle; L-ornithine and urea from L-arginine: step 1/1. Functionally, as well as its role in the urea cycle, may be involved in tissue remodeling. This Xenopus laevis (African clawed frog) protein is Arginase, non-hepatic 3 (arg2-c).